Reading from the N-terminus, the 331-residue chain is UDP-glucose 4-epimerase (331 aa).

NAD(+)-binding positions include 11-12 (YI), 31-36 (DNLITG), 51-52 (DI), 73-77 (FAAFS), asparagine 92, threonine 117, tyrosine 141, lysine 145, and phenylalanine 169. Substrate contacts are provided by threonine 117 and tyrosine 141. The active-site Proton acceptor is the tyrosine 141. Residues asparagine 170, 189–190 (HI), 206–208 (QIY), arginine 221, and 282–285 (RAGD) each bind substrate.

This sequence belongs to the NAD(P)-dependent epimerase/dehydratase family. In terms of assembly, homodimer. NAD(+) serves as cofactor.

It carries out the reaction UDP-alpha-D-glucose = UDP-alpha-D-galactose. Its pathway is carbohydrate metabolism; galactose metabolism. This is UDP-glucose 4-epimerase (galE) from Lacticaseibacillus casei (Lactobacillus casei).